A 505-amino-acid polypeptide reads, in one-letter code: 2,3-bisphosphoglycerate-independent phosphoglycerate mutase (505 aa).

Mn(2+) is bound by residues Asp11 and Ser61. Ser61 (phosphoserine intermediate) is an active-site residue. Residues His122, 152–153 (RD), Arg183, Arg189, 259–262 (RTDR), and Lys332 contribute to the substrate site. Mn(2+)-binding residues include Asp399, His403, Asp440, His441, and His458.

The protein belongs to the BPG-independent phosphoglycerate mutase family. As to quaternary structure, monomer. The cofactor is Mn(2+).

The catalysed reaction is (2R)-2-phosphoglycerate = (2R)-3-phosphoglycerate. It participates in carbohydrate degradation; glycolysis; pyruvate from D-glyceraldehyde 3-phosphate: step 3/5. In terms of biological role, catalyzes the interconversion of 2-phosphoglycerate and 3-phosphoglycerate. The protein is 2,3-bisphosphoglycerate-independent phosphoglycerate mutase of Flavobacterium johnsoniae (strain ATCC 17061 / DSM 2064 / JCM 8514 / BCRC 14874 / CCUG 350202 / NBRC 14942 / NCIMB 11054 / UW101) (Cytophaga johnsonae).